Here is a 100-residue protein sequence, read N- to C-terminus: NADH-quinone oxidoreductase subunit K (100 aa).

3 consecutive transmembrane segments (helical) span residues 4 to 24, 28 to 48, and 60 to 80; these read LQHGLILAAILFVLGLTGLVI, LLFMLIGLEIMINAAALAFVV, and IMYILAISLAAAEASIGLALL.

This sequence belongs to the complex I subunit 4L family. NDH-1 is composed of 13 different subunits. Subunits NuoA, H, J, K, L, M, N constitute the membrane sector of the complex.

The protein resides in the cell inner membrane. The enzyme catalyses a quinone + NADH + 5 H(+)(in) = a quinol + NAD(+) + 4 H(+)(out). Functionally, NDH-1 shuttles electrons from NADH, via FMN and iron-sulfur (Fe-S) centers, to quinones in the respiratory chain. The immediate electron acceptor for the enzyme in this species is believed to be ubiquinone. Couples the redox reaction to proton translocation (for every two electrons transferred, four hydrogen ions are translocated across the cytoplasmic membrane), and thus conserves the redox energy in a proton gradient. The chain is NADH-quinone oxidoreductase subunit K from Cronobacter sakazakii (strain ATCC BAA-894) (Enterobacter sakazakii).